A 153-amino-acid polypeptide reads, in one-letter code: Interleukin-4 (153 aa).

Residues 1–24 (MGLTSQLLPPLFFLLACAGNFVHG) form the signal peptide. 3 disulfides stabilise this stretch: C27-C151, C48-C89, and C70-C123. N62 carries an N-linked (GlcNAc...) asparagine glycan.

This sequence belongs to the IL-4/IL-13 family.

It localises to the secreted. Participates in at least several B-cell activation processes as well as of other cell types. It is a costimulator of DNA-synthesis. It induces the expression of class II MHC molecules on resting B-cells. It enhances both secretion and cell surface expression of IgE and IgG1. It also regulates the expression of the low affinity Fc receptor for IgE (CD23) on both lymphocytes and monocytes. Positively regulates IL31RA expression in macrophages. Stimulates autophagy in dendritic cells by interfering with mTORC1 signaling and through the induction of RUFY4. The chain is Interleukin-4 (IL4) from Macaca fascicularis (Crab-eating macaque).